A 323-amino-acid chain; its full sequence is DNA-directed RNA polymerase subunit alpha (323 aa).

The tract at residues 1 to 233 is alpha N-terminal domain (alpha-NTD); the sequence is MGQEKVTVST…DLFIPFFHAE (233 aa). Residues 264-323 are alpha C-terminal domain (alpha-CTD); it reads IALKYIYIDQSELPPRVYNCLKRSNINTFLELLNNSQEELMKIQDFRIEDVKHILDVLEI.

The protein belongs to the RNA polymerase alpha chain family. In terms of assembly, in plastids the minimal PEP RNA polymerase catalytic core is composed of four subunits: alpha, beta, beta', and beta''. When a (nuclear-encoded) sigma factor is associated with the core the holoenzyme is formed, which can initiate transcription.

The protein localises to the plastid. The protein resides in the chloroplast. It catalyses the reaction RNA(n) + a ribonucleoside 5'-triphosphate = RNA(n+1) + diphosphate. Functionally, DNA-dependent RNA polymerase catalyzes the transcription of DNA into RNA using the four ribonucleoside triphosphates as substrates. The protein is DNA-directed RNA polymerase subunit alpha of Morus indica (Mulberry).